Consider the following 385-residue polypeptide: Ribosomal RNA large subunit methyltransferase G (385 aa).

This sequence belongs to the methyltransferase superfamily. RlmG family.

The protein resides in the cytoplasm. It carries out the reaction guanosine(1835) in 23S rRNA + S-adenosyl-L-methionine = N(2)-methylguanosine(1835) in 23S rRNA + S-adenosyl-L-homocysteine + H(+). In terms of biological role, specifically methylates the guanine in position 1835 (m2G1835) of 23S rRNA. The polypeptide is Ribosomal RNA large subunit methyltransferase G (Vibrio parahaemolyticus serotype O3:K6 (strain RIMD 2210633)).